The primary structure comprises 379 residues: Anhydro-N-acetylmuramic acid kinase (379 aa).

12 to 19 serves as a coordination point for ATP; the sequence is GTSLDGMD.

Belongs to the anhydro-N-acetylmuramic acid kinase family.

It carries out the reaction 1,6-anhydro-N-acetyl-beta-muramate + ATP + H2O = N-acetyl-D-muramate 6-phosphate + ADP + H(+). It functions in the pathway amino-sugar metabolism; 1,6-anhydro-N-acetylmuramate degradation. Its pathway is cell wall biogenesis; peptidoglycan recycling. Functionally, catalyzes the specific phosphorylation of 1,6-anhydro-N-acetylmuramic acid (anhMurNAc) with the simultaneous cleavage of the 1,6-anhydro ring, generating MurNAc-6-P. Is required for the utilization of anhMurNAc either imported from the medium or derived from its own cell wall murein, and thus plays a role in cell wall recycling. In Gloeobacter violaceus (strain ATCC 29082 / PCC 7421), this protein is Anhydro-N-acetylmuramic acid kinase.